Consider the following 705-residue polypeptide: Elongation factor G (705 aa).

One can recognise a tr-type G domain in the interval 8–290; it reads EKYRNIGICA…GVVEYLPAPN (283 aa). GTP-binding positions include 17-24, 88-92, and 142-145; these read AHVDAGKT, DTPGH, and NKMD.

Belongs to the TRAFAC class translation factor GTPase superfamily. Classic translation factor GTPase family. EF-G/EF-2 subfamily.

The protein localises to the cytoplasm. In terms of biological role, catalyzes the GTP-dependent ribosomal translocation step during translation elongation. During this step, the ribosome changes from the pre-translocational (PRE) to the post-translocational (POST) state as the newly formed A-site-bound peptidyl-tRNA and P-site-bound deacylated tRNA move to the P and E sites, respectively. Catalyzes the coordinated movement of the two tRNA molecules, the mRNA and conformational changes in the ribosome. This is Elongation factor G from Francisella philomiragia subsp. philomiragia (strain ATCC 25017 / CCUG 19701 / FSC 153 / O#319-036).